Consider the following 160-residue polypeptide: Cyclic di-GMP-binding protein Smlt4090 (160 aa).

5 residues coordinate 3',3'-c-di-GMP: Lys-33, Lys-132, Arg-134, Asp-135, and Asp-160.

The protein belongs to the YajQ family.

Its function is as follows. Cyclic di-GMP effector that significantly contributes to virulence. Binds bis-(3',5')-cyclic diguanylate (cyclic di-GMP or c-di-GMP), an important bacterial second messenger that controls a wide range of cellular processes. This Stenotrophomonas maltophilia (strain K279a) protein is Cyclic di-GMP-binding protein Smlt4090.